A 93-amino-acid chain; its full sequence is uncharacterized protein (93 aa).

It belongs to the SIMIBI class G3E GTPase family. ArgK/MeaB subfamily.

This is an uncharacterized protein from Streptomyces virginiae (Streptomyces cinnamonensis).